Here is a 469-residue protein sequence, read N- to C-terminus: Endoplasmic reticulum oxidoreductin-1 (469 aa).

Positions 1–36 (MGKGAIKEEESEKKRKTWRWPLATLVVVFLAVAVSS) are cleaved as a signal peptide. Disulfide bonds link Cys-52–Cys-71, Cys-54–Cys-69, Cys-108–Cys-372, Cys-117–Cys-122, Cys-222–Cys-231, and Cys-375–Cys-378. Residues Arg-201, Thr-203, and Trp-214 each contribute to the FAD site. FAD is bound by residues Ser-242, His-245, Arg-275, and Arg-282. Asn-365 carries N-linked (GlcNAc...) asparagine glycosylation.

Belongs to the EROs family. As to quaternary structure, may function both as a monomer and a homodimer. The cofactor is FAD. N-glycosylated.

It localises to the endoplasmic reticulum membrane. In terms of biological role, essential oxidoreductase that oxidizes proteins in the endoplasmic reticulum to produce disulfide bonds. Acts by oxidizing directly PDI isomerase through a direct disulfide exchange. Does not act as a direct oxidant of folding substrate, but relies on PDI to transfer oxidizing equivalent. Does not oxidize all PDI related proteins, suggesting that it can discriminate between PDI and related proteins. Its reoxidation probably involves electron transfer to molecular oxygen via FAD. Acts independently of glutathione. May be responsible for a significant proportion of reactive oxygen species (ROS) in the cell, thereby being a source of oxidative stress. This is Endoplasmic reticulum oxidoreductin-1 (AERO1) from Arabidopsis thaliana (Mouse-ear cress).